Here is a 604-residue protein sequence, read N- to C-terminus: Ras guanine nucleotide exchange factor H (604 aa).

Polar residues predominate over residues 1–26 (MSNTNINVQSSTPKKSLGSSQYSLAG). Residues 1-61 (MSNTNINVQS…QENSIDDSGS (61 aa)) are disordered. Low complexity predominate over residues 27 to 49 (SSSSNLNNINNNNNNNNNNNNNS). The span at 50–61 (TGQENSIDDSGS) shows a compositional bias: polar residues. Residues 115 to 147 (NDTMLLKLIMQYFHEENLTTSLKKIQEETKVQF) form the LisH domain. The 115-residue stretch at 221 to 335 (PDGTIKAATF…AVINLKIENY (115 aa)) folds into the N-terminal Ras-GEF domain. The region spanning 365–591 (DEEEIARQLC…EQPQLTLDLS (227 aa)) is the Ras-GEF domain.

In terms of assembly, component of the Sca1 complex composed of at least gefA, gefH, scaA, phr, and the protein phosphatase 2A subunits pppA and pho2B. Interacts directly with gefA and phr.

The protein resides in the cell membrane. Promotes the exchange of Ras-bound GDP by GTP. Component of the Sca1 complex, a regulator of cell motility, chemotaxis and signal relay. The Sca1 complex is recruited to the plasma membrane in a chemoattractant- and F-actin-dependent manner and is enriched at the leading edge of chemotaxing cells where it regulates F-actin dynamics and signal relay by controlling the activation of rasC and the downstream target of rapamycin complex 2 (TORC2)-Akt/protein kinase B (PKB) pathway. The protein is Ras guanine nucleotide exchange factor H (gefH) of Dictyostelium discoideum (Social amoeba).